Consider the following 305-residue polypeptide: Alpha-N-acetylgalactosaminide alpha-2,6-sialyltransferase 3 (305 aa).

At 1–8 (MACILKRK) the chain is on the cytoplasmic side. A helical; Signal-anchor for type II membrane protein membrane pass occupies residues 9–28 (SVIAVSFIAAFLFLLVVRLV). Over 29–305 (NEVNFPLLLN…IFTHPNWTLS (277 aa)) the chain is Lumenal. A disulfide bond links cysteine 80 and cysteine 229. 3 N-linked (GlcNAc...) asparagine glycosylation sites follow: asparagine 148, asparagine 239, and asparagine 301.

It belongs to the glycosyltransferase 29 family. In terms of tissue distribution, expressed in brain and kidney. Observed in the epithelium of the proximal tubules, marginal expression was also found in the distal tubules and collecting tubules.

The protein resides in the golgi apparatus membrane. It catalyses the reaction an alpha-Neu5Ac-(2-&gt;3)-beta-D-Gal-(1-&gt;3)-D-GlcNAc derivative + CMP-N-acetyl-beta-neuraminate = an alpha-Neu5Ac-(2-&gt;3)-beta-D-Gal-(1-&gt;3)-[alpha-Neu5Ac-(2-&gt;6)]-D-GlcNAc derivative + CMP + H(+). The catalysed reaction is a ganglioside GM1b (d18:1(4E)) + CMP-N-acetyl-beta-neuraminate = a ganglioside GD1alpha (d18:1(4E)) + CMP + H(+). It carries out the reaction a globoside MSGG + CMP-N-acetyl-beta-neuraminate = a globoside DSGG + CMP + H(+). The enzyme catalyses 3-O-[alpha-Neu5Ac-(2-&gt;3)-beta-D-Gal-(1-&gt;3)-alpha-D-GalNAc]-L-Ser-[protein] + CMP-N-acetyl-beta-neuraminate = a 3-O-{alpha-Neu5Ac-(2-&gt;3)-beta-D-Gal-(1-&gt;3)-[alpha-Neu5Ac-(2-&gt;6)]-alpha-D-GalNAc}-L-seryl-[protein] + CMP + H(+). It catalyses the reaction 3-O-[alpha-Neu5Ac-(2-&gt;3)-beta-D-Gal-(1-&gt;3)-alpha-D-GalNAc]-L-Thr-[protein] + CMP-N-acetyl-beta-neuraminate = a 3-O-{alpha-Neu5Ac-(2-&gt;3)-beta-D-Gal-(1-&gt;3)-[alpha-Neu5Ac-(2-&gt;6)]-alpha-D-GalNAc}-L-threonyl-[protein] + CMP + H(+). Its pathway is protein modification; protein glycosylation. The protein operates within glycolipid biosynthesis. Functionally, transfers the sialyl group (N-acetyl-alpha-neuraminyl or NeuAc) from CMP-NeuAc to the GalNAc residue on the NeuAc-alpha-2,3-Gal-beta-1,3-GalNAc sequence of glycoproteins and glycolipids forming an alpha-2,6-linkage. Produces branched type disialyl structures by transfer of a sialyl group onto a GalNAc residue inside the backbone core chains. ST6GalNAcIII prefers glycolipids to glycoproteins, predominantly catalyzing the biosynthesis of ganglioside GD1alpha from GM1b. GD1alpha is a critical molecule in the communication and interaction between neuronal cells and their supportive cells, particularly in brain tissues, and functions as an adhesion molecule in the process of metastasis. Sialylation of glycoproteins or glycosphingolipids is very important in tumor development, neuronal development, nerve repair, immunological processes and regulation of hormone sensitivity. The protein is Alpha-N-acetylgalactosaminide alpha-2,6-sialyltransferase 3 (ST6GALNAC3) of Homo sapiens (Human).